The chain runs to 373 residues: Potential protein lysine methyltransferase SET6 (373 aa).

The SET domain occupies 12–338; it reads PFFQVRQTKW…KDEQICIDYS (327 aa).

It belongs to the class V-like SAM-binding methyltransferase superfamily.

Its function is as follows. Involved in resistance to compounds that target ergosterol biosynthesis, including fenpropimorph, dyclonine, and alverine citrate. Since a deletion in the absence of these compounds does not have an effect on growth, is more likely to be involved in compound availability. This is Potential protein lysine methyltransferase SET6 (SET6) from Saccharomyces cerevisiae (strain ATCC 204508 / S288c) (Baker's yeast).